Consider the following 329-residue polypeptide: NADH-quinone oxidoreductase subunit H (329 aa).

Transmembrane regions (helical) follow at residues 9-29 (LIKILILVAVFSALGGFATYI), 42-62 (GPCYVGPFGLLQVAADGIKLF), 75-95 (FIFTLAPIIAMVSAFVSMAPI), 117-137 (IGFLFFLAVGSAGIYAPILAG), 154-174 (IQLLSFEVVSTLTILAPLMVV), 188-208 (GGFLDWLVFKQPLAFVLFLIA), 238-258 (LKWGMFFLAEYAHLFAFSFVI), 269-291 (WGFIPGGIAILIKAGFFVFLSMW), and 309-329 (WKIMLPLALLNIVLTGIVILI).

Belongs to the complex I subunit 1 family. As to quaternary structure, NDH-1 is composed of 14 different subunits. Subunits NuoA, H, J, K, L, M, N constitute the membrane sector of the complex.

The protein resides in the cell inner membrane. It carries out the reaction a quinone + NADH + 5 H(+)(in) = a quinol + NAD(+) + 4 H(+)(out). Functionally, NDH-1 shuttles electrons from NADH, via FMN and iron-sulfur (Fe-S) centers, to quinones in the respiratory chain. The immediate electron acceptor for the enzyme in this species is believed to be ubiquinone. Couples the redox reaction to proton translocation (for every two electrons transferred, four hydrogen ions are translocated across the cytoplasmic membrane), and thus conserves the redox energy in a proton gradient. This subunit may bind ubiquinone. The sequence is that of NADH-quinone oxidoreductase subunit H from Helicobacter pylori (strain J99 / ATCC 700824) (Campylobacter pylori J99).